Reading from the N-terminus, the 110-residue chain is NADH-quinone oxidoreductase subunit K (110 aa).

Transmembrane regions (helical) follow at residues 13–33, 38–58, and 70–90; these read VTHGLIFSTLLFVISVAGIII, ILILLMSIELMLLAVNTNFLI, and VFVFFIMAVAAAETAIGLAIV.

It belongs to the complex I subunit 4L family. As to quaternary structure, NDH-1 is composed of 14 different subunits. Subunits NuoA, H, J, K, L, M, N constitute the membrane sector of the complex.

It is found in the cell inner membrane. The catalysed reaction is a quinone + NADH + 5 H(+)(in) = a quinol + NAD(+) + 4 H(+)(out). In terms of biological role, NDH-1 shuttles electrons from NADH, via FMN and iron-sulfur (Fe-S) centers, to quinones in the respiratory chain. The immediate electron acceptor for the enzyme in this species is believed to be ubiquinone. Couples the redox reaction to proton translocation (for every two electrons transferred, four hydrogen ions are translocated across the cytoplasmic membrane), and thus conserves the redox energy in a proton gradient. The sequence is that of NADH-quinone oxidoreductase subunit K from Francisella tularensis subsp. tularensis (strain FSC 198).